Reading from the N-terminus, the 697-residue chain is Probable glutamine--tRNA ligase (697 aa).

The short motif at 204–214 is the 'HIGH' region element; it reads PEPNGILHIGH. Residues 205-207 and 211-217 contribute to the ATP site; these read EPN and HIGHAKA. 2 residues coordinate L-glutamine: Asp237 and Tyr386. ATP is bound by residues Thr405, 434–435, and 442–444; these read RL and LSK. A 'KMSKS' region motif is present at residues 441–445; sequence VLSKR.

The protein belongs to the class-I aminoacyl-tRNA synthetase family.

The enzyme catalyses tRNA(Gln) + L-glutamine + ATP = L-glutaminyl-tRNA(Gln) + AMP + diphosphate. The sequence is that of Probable glutamine--tRNA ligase from Encephalitozoon cuniculi (strain GB-M1) (Microsporidian parasite).